A 426-amino-acid chain; its full sequence is Adenylosuccinate synthetase (426 aa).

Residues 18-24 and 46-48 each bind GTP; these read GDEGKGK and GHT. The active-site Proton acceptor is D19. Mg(2+)-binding residues include D19 and G46. Residues 19 to 22, 44 to 47, T136, R150, Q222, T237, and R301 each bind IMP; these read DEGK and NAGH. Catalysis depends on H47, which acts as the Proton donor. Substrate is bound at residue 297–303; that stretch reads VTTKRKR. GTP-binding positions include R303, 329 to 331, and 413 to 415; these read KID and GTG.

It belongs to the adenylosuccinate synthetase family. Homodimer. The cofactor is Mg(2+).

It is found in the cytoplasm. It carries out the reaction IMP + L-aspartate + GTP = N(6)-(1,2-dicarboxyethyl)-AMP + GDP + phosphate + 2 H(+). The protein operates within purine metabolism; AMP biosynthesis via de novo pathway; AMP from IMP: step 1/2. Functionally, plays an important role in the de novo pathway and in the salvage pathway of purine nucleotide biosynthesis. Catalyzes the first committed step in the biosynthesis of AMP from IMP. The sequence is that of Adenylosuccinate synthetase from Schistosoma mansoni (Blood fluke).